A 286-amino-acid chain; its full sequence is Nucleoid occlusion protein (286 aa).

A DNA-binding region (H-T-H motif) is located at residues 147–166 (EALAQRLGKNQSTVANKLRL).

Belongs to the ParB family.

It is found in the cytoplasm. Its subcellular location is the nucleoid. Its function is as follows. Effects nucleoid occlusion by binding relatively nonspecifically to DNA and preventing the assembly of the division machinery in the vicinity of the nucleoid, especially under conditions that disturb the cell cycle. It helps to coordinate cell division and chromosome segregation by preventing the formation of the Z ring through the nucleoid, which would cause chromosome breakage. The sequence is that of Nucleoid occlusion protein from Oceanobacillus iheyensis (strain DSM 14371 / CIP 107618 / JCM 11309 / KCTC 3954 / HTE831).